The chain runs to 270 residues: Splicing factor YJU2 (270 aa).

The interval 1-32 (MSERKVLNKYIPPDYDPSIRPPKKKKKFQGPN) is disordered. Residues cysteine 48, cysteine 51, cysteine 84, and cysteine 87 each contribute to the Zn(2+) site. The interval 251–270 (PNFQPPKYAKRKMEKKKVLV) is disordered. The segment covering 258–270 (YAKRKMEKKKVLV) has biased composition (basic residues).

Belongs to the CWC16 family. YJU2 subfamily. In terms of assembly, component of the spliceosome. Present in the activated B complex, the catalytically activated B* complex which catalyzes the branching, the catalytic step 1 C complex catalyzing the exon ligation, and the postcatalytic P complex containing the ligated exons (mRNA) and the excised lariat intron. Belongs to the 40S cdc5-associated complex (or cwf complex), a spliceosome sub-complex reminiscent of a late-stage spliceosome composed of the U2, U5 and U6 snRNAs and at least brr2, cdc5, cwf2/prp3, cwf3/syf1, cwf4/syf3, cwf5/ecm2, spp42/cwf6, cwf7/spf27, cwf8, cwf9, cwf10, cwf11, cwf12, prp45/cwf13, cwf14, cwf15, cwf16, cwf17, cwf18, cwf19, cwf20, cwf21, cwf22, cwf23, cwf24, cwf25, cwf26, cyp7/cwf27, cwf28, cwf29/ist3, lea1, msl1, prp5/cwf1, prp10, prp12/sap130, prp17, prp22, sap61, sap62, sap114, sap145, slu7, smb1, smd1, smd3, smf1, smg1 and syf2.

It is found in the nucleus. Functionally, part of the spliceosome which catalyzes two sequential transesterification reactions, first the excision of the non-coding intron from pre-mRNA and then the ligation of the coding exons to form the mature mRNA. Plays a role in stabilizing the structure of the spliceosome catalytic core and docking of the branch helix into the active site, producing 5'-exon and lariat intron-3'-intermediates. This Schizosaccharomyces pombe (strain 972 / ATCC 24843) (Fission yeast) protein is Splicing factor YJU2 (cwf16).